We begin with the raw amino-acid sequence, 387 residues long: Succinyl-diaminopimelate desuccinylase (387 aa).

Residue histidine 74 coordinates Zn(2+). The active site involves aspartate 76. Aspartate 107 contributes to the Zn(2+) binding site. The active-site Proton acceptor is glutamate 142. Residues glutamate 143, glutamate 171, and histidine 360 each coordinate Zn(2+).

The protein belongs to the peptidase M20A family. DapE subfamily. In terms of assembly, homodimer. Requires Zn(2+) as cofactor. Co(2+) is required as a cofactor.

It catalyses the reaction N-succinyl-(2S,6S)-2,6-diaminopimelate + H2O = (2S,6S)-2,6-diaminopimelate + succinate. Its pathway is amino-acid biosynthesis; L-lysine biosynthesis via DAP pathway; LL-2,6-diaminopimelate from (S)-tetrahydrodipicolinate (succinylase route): step 3/3. In terms of biological role, catalyzes the hydrolysis of N-succinyl-L,L-diaminopimelic acid (SDAP), forming succinate and LL-2,6-diaminopimelate (DAP), an intermediate involved in the bacterial biosynthesis of lysine and meso-diaminopimelic acid, an essential component of bacterial cell walls. This Rhodopseudomonas palustris (strain BisA53) protein is Succinyl-diaminopimelate desuccinylase.